Here is a 1860-residue protein sequence, read N- to C-terminus: Probable helicase with zinc finger domain (1860 aa).

A C3H1-type zinc finger spans residues serine 168–glutamate 196. Glycine 661–threonine 668 is a binding site for ATP. Positions aspartate 787–alanine 790 match the DEAA box motif. Disordered regions lie at residues arginine 1106–phenylalanine 1136, threonine 1158–leucine 1177, glutamate 1286–alanine 1317, isoleucine 1556–histidine 1604, arginine 1641–serine 1709, and methionine 1749–lysine 1860. The span at serine 1107–glycine 1116 shows a compositional bias: low complexity. Basic and acidic residues predominate over residues glutamate 1286–aspartate 1298. Polar residues predominate over residues serine 1301–methionine 1313. Low complexity predominate over residues arginine 1641–glutamine 1660. Composition is skewed to pro residues over residues glutamine 1760–proline 1769 and proline 1783–proline 1794. The span at glycine 1847 to lysine 1860 shows a compositional bias: low complexity.

The protein belongs to the DNA2/NAM7 helicase family.

It localises to the nucleus. May act as a helicase. In Danio rerio (Zebrafish), this protein is Probable helicase with zinc finger domain (helz).